A 254-amino-acid polypeptide reads, in one-letter code: Sensory transduction protein LytR (254 aa).

The Response regulatory domain maps to 2–116 (RAIIVDDEPL…RIAQAVHKVE (115 aa)). The residue at position 53 (D53) is a 4-aspartylphosphate. A disordered region spans residues 120 to 143 (GQTTEHHSDSYTTASMDTQNNEKT). Residues 129 to 138 (SYTTASMDTQ) are compositionally biased toward polar residues. Positions 149–253 (LPIEVNERIH…MKTFKQMMGL (105 aa)) constitute an HTH LytTR-type domain.

Phosphorylated by LytS.

It localises to the cytoplasm. Member of the two-component regulatory system LytR/LytS that probably regulates genes involved in cell wall metabolism. The polypeptide is Sensory transduction protein LytR (lytR) (Staphylococcus saprophyticus subsp. saprophyticus (strain ATCC 15305 / DSM 20229 / NCIMB 8711 / NCTC 7292 / S-41)).